The chain runs to 223 residues: Large ribosomal subunit protein bL25 (223 aa).

This sequence belongs to the bacterial ribosomal protein bL25 family. CTC subfamily. Part of the 50S ribosomal subunit; part of the 5S rRNA/L5/L18/L25 subcomplex. Contacts the 5S rRNA. Binds to the 5S rRNA independently of L5 and L18.

In terms of biological role, this is one of the proteins that binds to the 5S RNA in the ribosome where it forms part of the central protuberance. The protein is Large ribosomal subunit protein bL25 of Albidiferax ferrireducens (strain ATCC BAA-621 / DSM 15236 / T118) (Rhodoferax ferrireducens).